The primary structure comprises 290 residues: Ribosomal large subunit pseudouridine synthase B (290 aa).

Residues 3 to 75 (EKLQKVLARA…ICRVLAYYKP (73 aa)) enclose the S4 RNA-binding domain. The active-site Nucleophile is the Asp110. A disordered region spans residues 256-290 (VEKDRRRMKANQIRRAVKRHSQVSGGRRSGGRNNG).

The protein belongs to the pseudouridine synthase RsuA family.

The catalysed reaction is uridine(2605) in 23S rRNA = pseudouridine(2605) in 23S rRNA. In terms of biological role, responsible for synthesis of pseudouridine from uracil-2605 in 23S ribosomal RNA. In Escherichia coli O157:H7, this protein is Ribosomal large subunit pseudouridine synthase B (rluB).